A 509-amino-acid polypeptide reads, in one-letter code: Coiled-coil domain-containing protein 181 (509 aa).

2 disordered regions span residues 27–122 (INDK…EDEE) and 287–368 (LAQV…NEKK). Composition is skewed to basic and acidic residues over residues 41–58 (ACKKEDDLDQELKEKETE) and 67–82 (DPDKPPKDEALPRRND). The span at 319 to 333 (RIQSAGVSPVTSTYC) shows a compositional bias: polar residues. Coiled coils occupy residues 335–377 (SPRQ…VFKA) and 418–488 (LKKK…RSKQ). The span at 337–368 (RQKELQKQLERKRERLKREEEQRKLEEENEKK) shows a compositional bias: basic and acidic residues.

Belongs to the CCDC181 family. Homodimer. Interacts with HOOK1. Interacts with HOOK2. Interacts with HOOK3.

It is found in the cytoplasm. The protein localises to the cytoskeleton. It localises to the cell projection. Its subcellular location is the cilium. The protein resides in the flagellum. Microtubule-binding protein that localizes to the microtubular manchette of elongating spermatids. The polypeptide is Coiled-coil domain-containing protein 181 (Rattus norvegicus (Rat)).